Reading from the N-terminus, the 137-residue chain is Mediator of RNA polymerase II transcription subunit 21 (137 aa).

Positions 37–56 (PKDTIAPSKADQPPEVDTLP) are disordered. The stretch at 87–130 (GLDNSEQDQLQSIKELEEELNVAEKQRQEAVKEKDEVLVKLDQT) forms a coiled coil.

This sequence belongs to the Mediator complex subunit 21 family. As to quaternary structure, component of the Mediator complex.

The protein resides in the nucleus. Functionally, component of the Mediator complex, a coactivator involved in the regulated transcription of nearly all RNA polymerase II-dependent genes. Mediator functions as a bridge to convey information from gene-specific regulatory proteins to the basal RNA polymerase II transcription machinery. Mediator is recruited to promoters by direct interactions with regulatory proteins and serves as a scaffold for the assembly of a functional preinitiation complex with RNA polymerase II and the general transcription factors. The sequence is that of Mediator of RNA polymerase II transcription subunit 21 (srb-7) from Neurospora crassa (strain ATCC 24698 / 74-OR23-1A / CBS 708.71 / DSM 1257 / FGSC 987).